A 479-amino-acid chain; its full sequence is Poly(A) polymerase catalytic subunit (479 aa).

Residues D202 and D204 contribute to the active site. Residues D202, D204, and D253 each coordinate Ca(2+).

It belongs to the poxviridae poly(A) polymerase catalytic subunit family. Heterodimer of a large (catalytic) subunit and a small (regulatory) subunit.

The enzyme catalyses RNA(n) + ATP = RNA(n)-3'-adenine ribonucleotide + diphosphate. Polymerase that creates the 3'-poly(A) tail of mRNA's. The chain is Poly(A) polymerase catalytic subunit (OPG063) from Bos taurus (Bovine).